Consider the following 230-residue polypeptide: Claudin-2 (230 aa).

Residues Met-1–Gln-7 are Cytoplasmic-facing. The chain crosses the membrane as a helical span at residues Leu-8–Pro-28. At Ser-29–Gln-81 the chain is on the extracellular side. Cys-54 and Cys-64 are joined by a disulfide. Residues Ala-82–Met-102 traverse the membrane as a helical segment. Residues Arg-103–Arg-116 lie on the Cytoplasmic side of the membrane. Residues Leu-117–Ala-137 traverse the membrane as a helical segment. Residues Trp-138 to Glu-162 are Extracellular-facing. The helical transmembrane segment at Ala-163–Phe-183 threads the bilayer. At Ser-184–Val-230 the chain is on the cytoplasmic side. The tract at residues Thr-205–Val-230 is disordered. Residue Lys-218 forms a Glycyl lysine isopeptide (Lys-Gly) (interchain with G-Cter in SUMO) linkage. A phosphoserine mark is found at Ser-219 and Ser-223. The segment covering Glu-220–Val-230 has biased composition (polar residues). The interval Tyr-229–Val-230 is interaction with TJP1, TJP2 and TJP3.

Belongs to the claudin family. Can form homo- and heteropolymers with other claudins to mediate paracellular barrier and channel functions of tight junctions in response to physiological stimuli. Homopolymers interact with CLDN3, but not CLDN1, homopolymers. Directly interacts with TJP1/ZO-1, TJP2/ZO-2 and TJP3/ZO-3. In terms of processing, the disulfide bond is necessary for pore formation, but is not required for correct protein trafficking.

It localises to the cell junction. Its subcellular location is the tight junction. The protein localises to the cell membrane. It carries out the reaction Na(+)(in) = Na(+)(out). The enzyme catalyses K(+)(in) = K(+)(out). It catalyses the reaction Rb(+)(in) = Rb(+)(out). The catalysed reaction is Li(+)(in) = Li(+)(out). It carries out the reaction Cs(+)(in) = Cs(+)(out). The enzyme catalyses Ca(2+)(in) = Ca(2+)(out). It catalyses the reaction methylamine(out) = methylamine(in). The catalysed reaction is choline(out) = choline(in). It carries out the reaction H2O(in) = H2O(out). Forms paracellular channels: polymerizes in tight junction strands with cation- and water-selective channels through the strands, conveying epithelial permeability in a process known as paracellular tight junction permeability. In intestinal epithelium, allows for sodium and water fluxes from the peritoneal side to the lumen of the intestine to regulate nutrient absorption and clear enteric pathogens as part of mucosal immune response. In kidney, allows passive sodium and calcium reabsorption across proximal tubules from the lumen back to the bloodstream. In the hepatobiliary tract, allows paracellular water and cation fluxes in the hepatic perivenous areas and biliary epithelium to generate bile flow and maintain osmotic gradients. The sequence is that of Claudin-2 (CLDN2) from Canis lupus familiaris (Dog).